Here is a 132-residue protein sequence, read N- to C-terminus: D-ribose pyranase (132 aa).

H20 serves as the catalytic Proton donor. Substrate is bound by residues D28, H99, and 121–123 (YSN).

The protein belongs to the RbsD / FucU family. RbsD subfamily. In terms of assembly, homodecamer.

The protein resides in the cytoplasm. The enzyme catalyses beta-D-ribopyranose = beta-D-ribofuranose. It participates in carbohydrate metabolism; D-ribose degradation; D-ribose 5-phosphate from beta-D-ribopyranose: step 1/2. Functionally, catalyzes the interconversion of beta-pyran and beta-furan forms of D-ribose. In Pseudomonas putida (strain GB-1), this protein is D-ribose pyranase.